Reading from the N-terminus, the 188-residue chain is Pyridoxal 5'-phosphate synthase subunit PdxT (188 aa).

Residue 46–48 (GES) coordinates L-glutamine. C78 (nucleophile) is an active-site residue. L-glutamine-binding positions include R105 and 134 to 135 (IR). Catalysis depends on charge relay system residues H170 and E172.

It belongs to the glutaminase PdxT/SNO family. As to quaternary structure, in the presence of PdxS, forms a dodecamer of heterodimers. Only shows activity in the heterodimer.

The catalysed reaction is aldehydo-D-ribose 5-phosphate + D-glyceraldehyde 3-phosphate + L-glutamine = pyridoxal 5'-phosphate + L-glutamate + phosphate + 3 H2O + H(+). It carries out the reaction L-glutamine + H2O = L-glutamate + NH4(+). It functions in the pathway cofactor biosynthesis; pyridoxal 5'-phosphate biosynthesis. Its function is as follows. Catalyzes the hydrolysis of glutamine to glutamate and ammonia as part of the biosynthesis of pyridoxal 5'-phosphate. The resulting ammonia molecule is channeled to the active site of PdxS. This Thermotoga maritima (strain ATCC 43589 / DSM 3109 / JCM 10099 / NBRC 100826 / MSB8) protein is Pyridoxal 5'-phosphate synthase subunit PdxT.